The primary structure comprises 1584 residues: Adhesion G protein-coupled receptor B1 (1584 aa).

The first 30 residues, 1–30, serve as a signal peptide directing secretion; it reads MRGQAAAPGPVWILAPLLLLLLLLGRRARA. Residues 31–948 lie on the Extracellular side of the membrane; it reads AAGADAGPGP…ANMEKATLPS (918 aa). Asparagine 64 carries an N-linked (GlcNAc...) asparagine glycan. The interval 146–167 is disordered; it reads RRQQPPQHDGLRPRAGPPGPTD. Positions 261 to 315 constitute a TSP type-1 1 domain; it reads TGGWKLWSLWGECTRDCGGGLQTRTRTCLPAPGVEGGGCEGVLEEGRQCNREACG. 3 disulfides stabilise this stretch: cysteine 273–cysteine 309, cysteine 277–cysteine 314, and cysteine 288–cysteine 299. Residues 313-335 form a disordered region; that stretch reads ACGPAGRTSSRSQSLRSTDARRR. Positions 319–329 are enriched in low complexity; that stretch reads RTSSRSQSLRS. 4 TSP type-1 domains span residues 354 to 407, 409 to 462, 467 to 520, and 522 to 575; these read DPAA…AVCP, HGAW…ALCP, DGNW…QQCP, and DGKW…QRCP. Intrachain disulfides connect cysteine 366-cysteine 400, cysteine 370-cysteine 406, cysteine 381-cysteine 390, cysteine 421-cysteine 456, cysteine 425-cysteine 461, cysteine 436-cysteine 446, cysteine 479-cysteine 514, cysteine 483-cysteine 519, cysteine 494-cysteine 504, cysteine 534-cysteine 569, cysteine 538-cysteine 574, cysteine 549-cysteine 559, cysteine 581-cysteine 616, and cysteine 604-cysteine 634. Residue asparagine 401 is glycosylated (N-linked (GlcNAc...) asparagine). Asparagine 607 carries an N-linked (GlcNAc...) asparagine glycan. Threonine 609 carries the phosphothreonine modification. 4 N-linked (GlcNAc...) asparagine glycosylation sites follow: asparagine 692, asparagine 844, asparagine 877, and asparagine 881. The region spanning 760–939 is the GAIN-B domain; that stretch reads RDAYQVTDNL…AILAQLSADA (180 aa). Cystine bridges form between cysteine 884/cysteine 921 and cysteine 909/cysteine 923. Positions 884 to 939 are GPS; that stretch reads CILWDETDVPSSSAPPQLGPWSWRGCRTVPLDALRTRCLCDRLSTFAILAQLSADA. The segment at 927–943 is N-terminal stalk following vasculostatin-120 cleavage which is not required for signaling activity; the sequence is STFAILAQLSADANMEK. A helical transmembrane segment spans residues 949 to 969; sequence VTLIVGCGVSSLTLLMLVIIY. Residues 970–980 are Cytoplasmic-facing; that stretch reads VSVWRYIRSER. The helical transmembrane segment at 981 to 1001 threads the bilayer; sequence SVILINFCLSIISSNALILIG. Residues 1002 to 1008 lie on the Extracellular side of the membrane; it reads QTQTRNK. The helical transmembrane segment at 1009–1029 threads the bilayer; it reads VVCTLVAAFLHFFFLSSFCWV. The Cytoplasmic portion of the chain corresponds to 1030–1052; that stretch reads LTEAWQSYMAVTGHLRNRLIRKR. A helical membrane pass occupies residues 1053-1073; it reads FLCLGWGLPALVVAISVGFTK. Residues 1074–1093 are Extracellular-facing; the sequence is AKGYSTMNYCWLSLEGGLLY. The helical transmembrane segment at 1094–1114 threads the bilayer; the sequence is AFVGPAAAVVLVNMVIGILVF. At 1115 to 1136 the chain is on the cytoplasmic side; sequence NKLVSKDGITDKKLKERAGASL. Residues 1137–1157 traverse the membrane as a helical segment; the sequence is WSSCVVLPLLALTWMSAVLAV. At 1158 to 1166 the chain is on the extracellular side; sequence TDRRSALFQ. Residues 1167-1187 traverse the membrane as a helical segment; the sequence is ILFAVFDSLEGFVIVMVHCIL. The Cytoplasmic segment spans residues 1188–1584; it reads RREVQDAVKC…QDIIDLQTEV (397 aa). Residues 1365–1584 are involved in interaction with MAGI1; that stretch reads YSIHIDQMPQ…QDIIDLQTEV (220 aa). Disordered regions lie at residues 1385 to 1475 and 1501 to 1548; these read EASL…RRKS and RKLQ…KKEL. A compositionally biased stretch (pro residues) spans 1391–1439; that stretch reads RSPPSRQPPSGGPPEAPPAQPPPPPPPPPPPPQQPLPPPPNLEPAPPSL. The segment covering 1453 to 1469 has biased composition (polar residues); the sequence is TGPSTKNENVATLSVSS. The residue at position 1469 (serine 1469) is a Phosphoserine. A compositionally biased stretch (basic and acidic residues) spans 1501–1522; sequence RKLQHAAEKDKEVLGPDSKPEK. An indispensable for interaction with MAGI1 region spans residues 1581 to 1584; that stretch reads QTEV.

Belongs to the G-protein coupled receptor 2 family. LN-TM7 subfamily. As to quaternary structure, interacts with ELMO1 and DOCK. When bound to ELMO1 and DOCK1, acts as a module to promote apoptotic cell engulfment. Interacts with MDM2; the interaction results in inhibition of MDM2-mediated ubiquitination and degradation of DLG4/PSD95. Interacts with PARD3 and TIAM1; the interaction is required for correct dendritic. localization of PARD3 and TIAM1 and for dendritic spine formation. Interacts with MAGI1. Interacts with MAGI3. Interacts with BAIAP2. Interacts with PHYHIP. Interacts with DLG4 (via PDZ domain). Vasculostatin-120: Interacts with CD36. Vasculostatin-120: Interacts with ARRB2. Interacts with BAIAP3; this interaction is direct. Post-translationally, proteolytically cleaved to produce vasculostatin-40 and vasculostatin-120. Vasculostatin-40 is the major form and is produced through proteolytic cleavage by MMP14 between residues 321 and 329 with cleavage likely to be between Ser-326 and Leu-327. Ubiquitinated. As to expression, expressed in brain (at protein level). Expressed on mononuclear phagocytes and monocyte-derived macrophages in the gastric mucosa (at protein level). Expressed in normal pancreatic tissue but not in pancreatic tumor tissue. Reduced or no expression is observed in some glioblastomas.

It localises to the cell membrane. Its subcellular location is the cell projection. It is found in the phagocytic cup. The protein resides in the cell junction. The protein localises to the focal adhesion. It localises to the dendritic spine. Its subcellular location is the postsynaptic density. It is found in the secreted. Its function is as follows. Phosphatidylserine receptor which enhances the engulfment of apoptotic cells. Also mediates the binding and engulfment of Gram-negative bacteria. Stimulates production of reactive oxygen species by macrophages in response to Gram-negative bacteria, resulting in enhanced microbicidal macrophage activity. In the gastric mucosa, required for recognition and engulfment of apoptotic gastric epithelial cells. Promotes myoblast fusion. Activates the Rho pathway in a G-protein-dependent manner. Inhibits MDM2-mediated ubiquitination and degradation of DLG4/PSD95, promoting DLG4 stability and regulating synaptic plasticity. Required for the formation of dendritic spines by ensuring the correct localization of PARD3 and TIAM1. Potent inhibitor of angiogenesis in brain and may play a significant role as a mediator of the p53/TP53 signal in suppression of glioblastoma. Functionally, inhibits angiogenesis in a CD36-dependent manner. In terms of biological role, inhibits angiogenesis. This chain is Adhesion G protein-coupled receptor B1, found in Homo sapiens (Human).